Here is a 462-residue protein sequence, read N- to C-terminus: uncharacterized protein (462 aa).

One can recognise a TRAM domain in the interval 12-70 (MLKKNDIIQVAISDLSHEGAGVAKHDGFVFFVDNALPEEVIDMRVLKVNKNSGFGKVEA). 4 residues coordinate S-adenosyl-L-methionine: Q294, Y323, E344, and D392. The active-site Nucleophile is the C419.

The protein belongs to the class I-like SAM-binding methyltransferase superfamily. RNA M5U methyltransferase family.

This is an uncharacterized protein from Streptococcus pyogenes serotype M3 (strain ATCC BAA-595 / MGAS315).